Reading from the N-terminus, the 474-residue chain is 4-O-methyl-glucuronoyl methylesterase (474 aa).

An N-terminal signal peptide occupies residues 1–17 (MFKPSFVALALVSYATA). The region spanning 19 to 55 (ASAPQWGQCGGIGWTGPTACPSGWACQQLNAYYSQCL) is the CBM1 domain. The disordered stretch occupies residues 61 to 91 (APARTTAAPPPPPATTAAPPPPTTSAPTGSS). A compositionally biased stretch (pro residues) spans 68–84 (APPPPPATTAAPPPPTT). A glycan (N-linked (GlcNAc...) asparagine) is linked at Asn-120. A GXSYXG catalytic site motif motif is present at residues 284–289 (GCSRDG). 2 cysteine pairs are disulfide-bonded: Cys-285–Cys-421 and Cys-317–Cys-393. Ser-286 acts as the Nucleophile in catalysis. Lys-290, Gln-332, Glu-340, and Trp-384 together coordinate substrate. His-420 functions as the Proton donor/acceptor in the catalytic mechanism.

Belongs to the carbohydrate esterase 15 (CE15) family. In terms of processing, N-glycosylated.

The protein localises to the secreted. It catalyses the reaction a 4-O-methyl-alpha-D-glucuronosyl ester derivative + H2O = 4-O-methyl-alpha-D-glucuronate derivative + an alcohol + H(+). Glucuronoyl esterase which may play a significant role in biomass degradation, as it is considered to disconnect hemicellulose from lignin through the hydrolysis of the ester bond between 4-O-methyl-D-glucuronic acid residues of glucuronoxylans and aromatic alcohols of lignin. This Cerrena unicolor (Canker rot fungus) protein is 4-O-methyl-glucuronoyl methylesterase.